Here is a 207-residue protein sequence, read N- to C-terminus: Protein YABBY 6 (207 aa).

Residues 16 to 43 (CNFCNTILAVSVPGNSMLNIVTVRCGHC) form a C4-type zinc finger.

This sequence belongs to the YABBY family. Expressed in leaf blades, leaf sheaths and flowers.

Its subcellular location is the nucleus. The chain is Protein YABBY 6 (YAB6) from Oryza sativa subsp. japonica (Rice).